A 320-amino-acid polypeptide reads, in one-letter code: Acyl-coenzyme A thioesterase 8 (320 aa).

Active-site charge relay system residues include aspartate 233, serine 255, and glutamine 305. Residues 318–320 (SKL) carry the Microbody targeting signal motif.

Belongs to the C/M/P thioester hydrolase family. As to quaternary structure, homodimer.

The protein localises to the peroxisome matrix. It carries out the reaction choloyl-CoA + H2O = cholate + CoA + H(+). The catalysed reaction is chenodeoxycholoyl-CoA + H2O = chenodeoxycholate + CoA + H(+). The enzyme catalyses acetyl-CoA + H2O = acetate + CoA + H(+). It catalyses the reaction butanoyl-CoA + H2O = butanoate + CoA + H(+). It carries out the reaction hexanoyl-CoA + H2O = hexanoate + CoA + H(+). The catalysed reaction is octanoyl-CoA + H2O = octanoate + CoA + H(+). The enzyme catalyses decanoyl-CoA + H2O = decanoate + CoA + H(+). It catalyses the reaction dodecanoyl-CoA + H2O = dodecanoate + CoA + H(+). It carries out the reaction tetradecanoyl-CoA + H2O = tetradecanoate + CoA + H(+). The catalysed reaction is 4,8-dimethylnonanoyl-CoA + H2O = 4,8-dimethylnonanoate + CoA + H(+). The enzyme catalyses 2,6-dimethylheptanoyl-CoA + H2O = 2,6-dimethylheptanoate + CoA + H(+). It catalyses the reaction malonyl-CoA + H2O = malonate + CoA + H(+). It carries out the reaction acetoacetyl-CoA + H2O = acetoacetate + CoA + H(+). The catalysed reaction is propanoyl-CoA + H2O = propanoate + CoA + H(+). The enzyme catalyses succinyl-CoA + H2O = succinate + CoA + H(+). It catalyses the reaction glutaryl-CoA + H2O = glutarate + CoA + H(+). It carries out the reaction hexanedioyl-CoA + H2O = hexanedioate + CoA + H(+). The catalysed reaction is octanedioyl-CoA + H2O = octanedioate + CoA + H(+). The enzyme catalyses decanedioyl-CoA + H2O = decanedioate + CoA + H(+). It catalyses the reaction dodecanedioyl-CoA + H2O = dodecanedioate + CoA + H(+). It carries out the reaction (9Z)-tetradecenoyl-CoA + H2O = (9Z)-tetradecenoate + CoA + H(+). The catalysed reaction is hexadecanoyl-CoA + H2O = hexadecanoate + CoA + H(+). The enzyme catalyses (9Z)-hexadecenoyl-CoA + H2O = (9Z)-hexadecenoate + CoA + H(+). It catalyses the reaction octadecanoyl-CoA + H2O = octadecanoate + CoA + H(+). It carries out the reaction (9Z)-octadecenoyl-CoA + H2O = (9Z)-octadecenoate + CoA + H(+). The catalysed reaction is (9Z,12Z)-octadecadienoyl-CoA + H2O = (9Z,12Z)-octadecadienoate + CoA + H(+). The enzyme catalyses eicosanoyl-CoA + H2O = eicosanoate + CoA + H(+). It catalyses the reaction (5Z,8Z,11Z,14Z)-eicosatetraenoyl-CoA + H2O = (5Z,8Z,11Z,14Z)-eicosatetraenoate + CoA + H(+). It carries out the reaction (3S)-3-hydroxy-3-methylglutaryl-CoA + H2O = 3-hydroxy-3-methylglutarate + CoA + H(+). The catalysed reaction is 3alpha,7alpha,12alpha-trihydroxy-5beta-cholestan-26-oyl-CoA + H2O = 3alpha,7alpha,12alpha-trihydroxy-5beta-cholestan-26-oate + CoA + H(+). The enzyme catalyses 2-methyloctadecanoyl-CoA + H2O = 2-methyloctadecanoate + CoA + H(+). It catalyses the reaction prostaglandin F2alpha-CoA + H2O = prostaglandin F2alpha + CoA + H(+). Inhibited by CoASH (IC(50)=10-15 uM). Also inhibited by cysteine-reactive agents. In terms of biological role, catalyzes the hydrolysis of acyl-CoAs into free fatty acids and coenzyme A (CoASH), regulating their respective intracellular levels. Displays no strong substrate specificity with respect to the carboxylic acid moiety of Acyl-CoAs. Hydrolyzes medium length (C2 to C20) straight-chain, saturated and unsaturated acyl-CoAS but is inactive towards substrates with longer aliphatic chains. Moreover, it catalyzes the hydrolysis of CoA esters of bile acids, such as choloyl-CoA and chenodeoxycholoyl-CoA and competes with bile acid CoA:amino acid N-acyltransferase (BAAT). Is also able to hydrolyze CoA esters of dicarboxylic acids. It is involved in the metabolic regulation of peroxisome proliferation. The chain is Acyl-coenzyme A thioesterase 8 (Acot8) from Rattus norvegicus (Rat).